Here is a 347-residue protein sequence, read N- to C-terminus: Photosystem II protein D1 (347 aa).

3 helical membrane-spanning segments follow: residues 32–49 (YIGWFGILMFPLLVLATV), 121–136 (HFILGAGAYMGREWEF), and 145–159 (WIFVAFSAPLVAASA). Histidine 121 is a chlorophyll a binding site. A pheophytin a-binding site is contributed by tyrosine 129. Residues aspartate 173 and glutamate 192 each contribute to the [CaMn4O5] cluster site. A helical transmembrane segment spans residues 200–221 (FHILGVAAVFGGSLFSAMHGSL). Position 201 (histidine 201) interacts with chlorophyll a. Residues histidine 218 and 267–268 (SF) each bind a quinone. Residue histidine 218 participates in Fe cation binding. A Fe cation-binding site is contributed by histidine 275. Residues 277–291 (FLAAWPVIGIWFTAL) form a helical membrane-spanning segment. 4 residues coordinate [CaMn4O5] cluster: histidine 335, glutamate 336, aspartate 345, and alanine 347.

It belongs to the reaction center PufL/M/PsbA/D family. As to quaternary structure, PSII is composed of 1 copy each of membrane proteins PsbA, PsbB, PsbC, PsbD, PsbE, PsbF, PsbH, PsbI, PsbJ, PsbK, PsbL, PsbM, PsbT, PsbX, PsbY, PsbZ, Psb30/Ycf12, at least 3 peripheral proteins of the oxygen-evolving complex and a large number of cofactors. It forms dimeric complexes. Requires The D1/D2 heterodimer binds P680, chlorophylls that are the primary electron donor of PSII, and subsequent electron acceptors. It shares a non-heme iron and each subunit binds pheophytin, quinone, additional chlorophylls, carotenoids and lipids. D1 provides most of the ligands for the Mn4-Ca-O5 cluster of the oxygen-evolving complex (OEC). There is also a Cl(-1) ion associated with D1 and D2, which is required for oxygen evolution. The PSII complex binds additional chlorophylls, carotenoids and specific lipids. as cofactor. In terms of processing, tyr-164 forms a radical intermediate that is referred to as redox-active TyrZ, YZ or Y-Z.

Its subcellular location is the plastid. The protein resides in the chloroplast thylakoid membrane. It catalyses the reaction 2 a plastoquinone + 4 hnu + 2 H2O = 2 a plastoquinol + O2. Functionally, photosystem II (PSII) is a light-driven water:plastoquinone oxidoreductase that uses light energy to abstract electrons from H(2)O, generating O(2) and a proton gradient subsequently used for ATP formation. It consists of a core antenna complex that captures photons, and an electron transfer chain that converts photonic excitation into a charge separation. The D1/D2 (PsbA/PsbD) reaction center heterodimer binds P680, the primary electron donor of PSII as well as several subsequent electron acceptors. The protein is Photosystem II protein D1 of Heterocapsa niei (Dinoflagellate).